Here is a 338-residue protein sequence, read N- to C-terminus: Calcium uniporter protein 4, mitochondrial (338 aa).

Residues 1-36 (MVMMKKLLSNRLFNMSKTASQSLMNCRTSSSSSLAM) constitute a mitochondrion transit peptide. A helical membrane pass occupies residues 233–253 (LWAGLGYLIIQTAGFMRLTFW). Residues 257-265 (WDVMEPICF) carry the Selectivity filter motif. Residue glutamate 261 coordinates Ca(2+). Residues 263-280 (ICFYVSSVYFMAGYTFFL) traverse the membrane as a helical segment.

Belongs to the MCU (TC 1.A.77) family.

Its subcellular location is the mitochondrion inner membrane. It catalyses the reaction Ca(2+)(in) = Ca(2+)(out). In terms of biological role, mitochondrial inner membrane calcium uniporter that mediates calcium uptake into mitochondria. Constitutes a pore-forming and calcium-conducting subunit. Mitochondrial calcium homeostasis plays key roles in cellular physiology and regulates cell bioenergetics, cytoplasmic calcium signals and activation of cell death pathways. The chain is Calcium uniporter protein 4, mitochondrial from Arabidopsis thaliana (Mouse-ear cress).